Reading from the N-terminus, the 708-residue chain is Protein MICRORCHIDIA 5 (708 aa).

Residues Met1–Ser11 show a composition bias toward polar residues. The interval Met1 to Thr47 is disordered. The span at Leu23 to Asp34 shows a compositional bias: basic and acidic residues. Positions Ser590 to Thr665 form a coiled coil. Residues Ala672–Asp679 carry the Nuclear localization signal motif.

This sequence belongs to the MORC ATPase protein family. In terms of assembly, homodimer and heterodimer. Component of an RNA-directed DNA methylation (RdDM) complex. Mg(2+) is required as a cofactor. Mn(2+) serves as cofactor.

The protein resides in the nucleus. Functionally, exhibits ATPase activity. Binds DNA/RNA in a non-specific manner and exhibits endonuclease activity. Probably involved in DNA repair. Involved in RNA-directed DNA methylation (RdDM) as a component of the RdDM machinery and required for gene silencing. May also be involved in the regulation of chromatin architecture to maintain gene silencing. In Arabidopsis thaliana (Mouse-ear cress), this protein is Protein MICRORCHIDIA 5.